Here is a 943-residue protein sequence, read N- to C-terminus: Isoleucine--tRNA ligase (943 aa).

Residues 59–69 carry the 'HIGH' region motif; the sequence is PYANGQIHLGH. E577 is an L-isoleucyl-5'-AMP binding site. Positions 618 to 622 match the 'KMSKS' region motif; it reads KMSKS. ATP is bound at residue K621. Zn(2+) is bound by residues C906, C909, C926, and C929.

The protein belongs to the class-I aminoacyl-tRNA synthetase family. IleS type 1 subfamily. In terms of assembly, monomer. Zn(2+) is required as a cofactor.

It is found in the cytoplasm. The enzyme catalyses tRNA(Ile) + L-isoleucine + ATP = L-isoleucyl-tRNA(Ile) + AMP + diphosphate. In terms of biological role, catalyzes the attachment of isoleucine to tRNA(Ile). As IleRS can inadvertently accommodate and process structurally similar amino acids such as valine, to avoid such errors it has two additional distinct tRNA(Ile)-dependent editing activities. One activity is designated as 'pretransfer' editing and involves the hydrolysis of activated Val-AMP. The other activity is designated 'posttransfer' editing and involves deacylation of mischarged Val-tRNA(Ile). This chain is Isoleucine--tRNA ligase, found in Xanthomonas oryzae pv. oryzae (strain MAFF 311018).